The sequence spans 339 residues: MO25-like protein 3 (339 aa).

It belongs to the Mo25 family.

The sequence is that of MO25-like protein 3 (mop-25.3) from Caenorhabditis elegans.